The sequence spans 241 residues: 6-hydroxymethyl-7,8-dihydropterin pyrophosphokinase (241 aa).

Belongs to the archaeal 6-HMPDK family. It depends on Mg(2+) as a cofactor.

It carries out the reaction 6-hydroxymethyl-7,8-dihydropterin + ATP = (7,8-dihydropterin-6-yl)methyl diphosphate + AMP + H(+). It participates in cofactor biosynthesis; 5,6,7,8-tetrahydromethanopterin biosynthesis. Catalyzes the transfer of diphosphate from ATP to 6-hydroxymethyl-7,8-dihydropterin (6-HMD), leading to 6-hydroxymethyl-7,8-dihydropterin diphosphate (6-HMDP). This is 6-hydroxymethyl-7,8-dihydropterin pyrophosphokinase from Methanocaldococcus jannaschii (strain ATCC 43067 / DSM 2661 / JAL-1 / JCM 10045 / NBRC 100440) (Methanococcus jannaschii).